We begin with the raw amino-acid sequence, 113 residues long: Retrotransposon Gag-like protein 8C (113 aa).

The protein belongs to the FAM127 family.

In Homo sapiens (Human), this protein is Retrotransposon Gag-like protein 8C.